The following is a 310-amino-acid chain: Ribosomal RNA small subunit methyltransferase H (310 aa).

S-adenosyl-L-methionine is bound by residues 33–35 (AGH), aspartate 53, phenylalanine 79, aspartate 100, and glutamine 107.

This sequence belongs to the methyltransferase superfamily. RsmH family.

Its subcellular location is the cytoplasm. The enzyme catalyses cytidine(1402) in 16S rRNA + S-adenosyl-L-methionine = N(4)-methylcytidine(1402) in 16S rRNA + S-adenosyl-L-homocysteine + H(+). Functionally, specifically methylates the N4 position of cytidine in position 1402 (C1402) of 16S rRNA. The protein is Ribosomal RNA small subunit methyltransferase H of Clostridium botulinum (strain Eklund 17B / Type B).